Here is a 348-residue protein sequence, read N- to C-terminus: D-alanine--D-alanine ligase (348 aa).

The region spanning 132–334 is the ATP-grasp domain; the sequence is KRVLESAGIP…YAELIEELVR (203 aa). Residue 162 to 217 coordinates ATP; the sequence is EAVLSYPVFVKPANMGSSVGISKAESEEELRAAILLALTYDSRILIEQGVLAREIE. Residues Asp288, Glu301, and Asn303 each contribute to the Mg(2+) site.

This sequence belongs to the D-alanine--D-alanine ligase family. It depends on Mg(2+) as a cofactor. The cofactor is Mn(2+).

Its subcellular location is the cytoplasm. It catalyses the reaction 2 D-alanine + ATP = D-alanyl-D-alanine + ADP + phosphate + H(+). The protein operates within cell wall biogenesis; peptidoglycan biosynthesis. Cell wall formation. In Streptococcus equi subsp. equi (strain 4047), this protein is D-alanine--D-alanine ligase.